The following is a 229-amino-acid chain: Orotidine 5'-phosphate decarboxylase (229 aa).

Substrate is bound by residues Asp-10, Lys-32, 59-68 (DLKFHDIPNT), Thr-119, Arg-180, Gln-189, Gly-209, and Arg-210. Lys-61 functions as the Proton donor in the catalytic mechanism.

This sequence belongs to the OMP decarboxylase family. Type 1 subfamily. Homodimer.

It catalyses the reaction orotidine 5'-phosphate + H(+) = UMP + CO2. It participates in pyrimidine metabolism; UMP biosynthesis via de novo pathway; UMP from orotate: step 2/2. Functionally, catalyzes the decarboxylation of orotidine 5'-monophosphate (OMP) to uridine 5'-monophosphate (UMP). The polypeptide is Orotidine 5'-phosphate decarboxylase (Legionella pneumophila (strain Corby)).